The sequence spans 491 residues: Ketol-acid reductoisomerase (NADP(+)) (491 aa).

Residues 15-208 enclose the KARI N-terminal Rossmann domain; it reads AQLGKCRFMG…GGHRAGVLES (194 aa). NADP(+) contacts are provided by residues 45-48, Arg-68, Arg-76, Ser-78, and 108-110; these read CGAQ and DKQ. The active site involves His-132. Gly-158 contributes to the NADP(+) binding site. 2 consecutive KARI C-terminal knotted domains span residues 209–344 and 345–484; these read SFVA…TAPQ and YEGK…MTDM. Asp-217, Glu-221, Glu-389, and Glu-393 together coordinate Mg(2+). Ser-414 lines the substrate pocket.

This sequence belongs to the ketol-acid reductoisomerase family. It depends on Mg(2+) as a cofactor.

The catalysed reaction is (2R)-2,3-dihydroxy-3-methylbutanoate + NADP(+) = (2S)-2-acetolactate + NADPH + H(+). It catalyses the reaction (2R,3R)-2,3-dihydroxy-3-methylpentanoate + NADP(+) = (S)-2-ethyl-2-hydroxy-3-oxobutanoate + NADPH + H(+). It participates in amino-acid biosynthesis; L-isoleucine biosynthesis; L-isoleucine from 2-oxobutanoate: step 2/4. The protein operates within amino-acid biosynthesis; L-valine biosynthesis; L-valine from pyruvate: step 2/4. Functionally, involved in the biosynthesis of branched-chain amino acids (BCAA). Catalyzes an alkyl-migration followed by a ketol-acid reduction of (S)-2-acetolactate (S2AL) to yield (R)-2,3-dihydroxy-isovalerate. In the isomerase reaction, S2AL is rearranged via a Mg-dependent methyl migration to produce 3-hydroxy-3-methyl-2-ketobutyrate (HMKB). In the reductase reaction, this 2-ketoacid undergoes a metal-dependent reduction by NADPH to yield (R)-2,3-dihydroxy-isovalerate. This Escherichia coli (strain 55989 / EAEC) protein is Ketol-acid reductoisomerase (NADP(+)).